Consider the following 185-residue polypeptide: Proton-translocating ferredoxin:NAD(+) oxidoreductase complex subunit G (185 aa).

Residues 14-34 (TKNLTITCFISGIIIAAVYYI) traverse the membrane as a helical segment. Threonine 161 is modified (FMN phosphoryl threonine).

This sequence belongs to the RnfG family. In terms of assembly, the complex is composed of six subunits: RnfA, RnfB, RnfC, RnfD, RnfE and RnfG. The cofactor is FMN.

It localises to the cell membrane. In terms of biological role, part of a membrane-bound complex that couples electron transfer with translocation of ions across the membrane. Couples electron transfer from reduced ferredoxin to NAD(+) with translocation of H(+) out of the cell. Essential for energy conservation during autotrophic growth. Contributes to ATP synthesis during heterotrophic growth. The chain is Proton-translocating ferredoxin:NAD(+) oxidoreductase complex subunit G from Clostridium ljungdahlii (strain ATCC 55383 / DSM 13528 / PETC).